The sequence spans 238 residues: ATP synthase subunit a (238 aa).

4 helical membrane passes run 17–37 (LSNILMITVTCVIVLLIAIIC), 80–100 (ITLLMFIFVANMLGLPFQIAI), 112–132 (DPIVTLTLAIMVLGLTHYYGI), and 194–214 (IFVGVLAIIPALLWQGFSIFI).

The protein belongs to the ATPase A chain family. F-type ATPases have 2 components, CF(1) - the catalytic core - and CF(0) - the membrane proton channel. CF(1) has five subunits: alpha(3), beta(3), gamma(1), delta(1), epsilon(1). CF(0) has three main subunits: a(1), b(2) and c(9-12). The alpha and beta chains form an alternating ring which encloses part of the gamma chain. CF(1) is attached to CF(0) by a central stalk formed by the gamma and epsilon chains, while a peripheral stalk is formed by the delta and b chains.

It is found in the cell membrane. Its function is as follows. Key component of the proton channel; it plays a direct role in the translocation of protons across the membrane. The chain is ATP synthase subunit a from Listeria innocua serovar 6a (strain ATCC BAA-680 / CLIP 11262).